The following is a 644-amino-acid chain: 3D-(3,5/4)-trihydroxycyclohexane-1,2-dione hydrolase (644 aa).

Position 65 (E65) interacts with thiamine diphosphate. The interval 442–522 is thiamine pyrophosphate binding; it reads SLPGDLQRMW…INVLLFDNSG (81 aa). Positions 493 and 520 each coordinate Mg(2+).

The protein belongs to the TPP enzyme family. The cofactor is Mg(2+). It depends on thiamine diphosphate as a cofactor.

It catalyses the reaction 3D-3,5/4-trihydroxycyclohexane-1,2-dione + H2O = 5-deoxy-D-glucuronate + H(+). Its pathway is polyol metabolism; myo-inositol degradation into acetyl-CoA; acetyl-CoA from myo-inositol: step 3/7. Involved in the cleavage of the C1-C2 bond of 3D-(3,5/4)-trihydroxycyclohexane-1,2-dione (THcHDO) to yield 5-deoxy-glucuronate (5DG). In Bacillus thuringiensis (strain Al Hakam), this protein is 3D-(3,5/4)-trihydroxycyclohexane-1,2-dione hydrolase.